Reading from the N-terminus, the 201-residue chain is MAKRVTGPEIEKLIQLLAKVPGLGPRSARRAALHLIKKKDQLLGPLSNAMGEAYDKVKICSRCGNVDTVDPCTVCTDTQRDQSIIIVVEDVSDLWALERAGAMNAAYHVLGGTLSPLDGIGPDDLNIRGLIDRIGEGGIRELIIAVNATVEGQTTAHYITDQLQGLNVKITRLAHGVPVGGELDYLDEGTLAAALRARTVI.

A C4-type zinc finger spans residues 60–75 (CSRCGNVDTVDPCTVC). Residues 83-178 (SIIIVVEDVS…KITRLAHGVP (96 aa)) form the Toprim domain.

It belongs to the RecR family.

Functionally, may play a role in DNA repair. It seems to be involved in an RecBC-independent recombinational process of DNA repair. It may act with RecF and RecO. In Rhizobium leguminosarum bv. trifolii (strain WSM2304), this protein is Recombination protein RecR.